Here is a 485-residue protein sequence, read N- to C-terminus: Glutamyl-tRNA(Gln) amidotransferase subunit A (485 aa).

Residues K78 and S153 each act as charge relay system in the active site. S177 (acyl-ester intermediate) is an active-site residue.

This sequence belongs to the amidase family. GatA subfamily. In terms of assembly, heterotrimer of A, B and C subunits.

The enzyme catalyses L-glutamyl-tRNA(Gln) + L-glutamine + ATP + H2O = L-glutaminyl-tRNA(Gln) + L-glutamate + ADP + phosphate + H(+). Functionally, allows the formation of correctly charged Gln-tRNA(Gln) through the transamidation of misacylated Glu-tRNA(Gln) in organisms which lack glutaminyl-tRNA synthetase. The reaction takes place in the presence of glutamine and ATP through an activated gamma-phospho-Glu-tRNA(Gln). The chain is Glutamyl-tRNA(Gln) amidotransferase subunit A from Bacillus cereus (strain 03BB102).